The chain runs to 470 residues: Histidine--tRNA ligase (470 aa).

The tract at residues 69-99 (GIDPILPPNRQAEKDKSGETGKDKSGETGSE) is disordered. Basic and acidic residues predominate over residues 79–94 (QAEKDKSGETGKDKSG).

It belongs to the class-II aminoacyl-tRNA synthetase family. As to quaternary structure, homodimer.

The protein resides in the cytoplasm. It catalyses the reaction tRNA(His) + L-histidine + ATP = L-histidyl-tRNA(His) + AMP + diphosphate + H(+). The protein is Histidine--tRNA ligase of Nostoc punctiforme (strain ATCC 29133 / PCC 73102).